A 65-amino-acid polypeptide reads, in one-letter code: MPKMKTHRASAKRFKKTANGGLKSASAYTSHRFHGKTKKQRRQLRGTRMMDSTTVKTYAKMLSNI.

2 stretches are compositionally biased toward basic residues: residues 1-16 and 31-45; these read MPKM…RFKK and HRFH…RQLR. Positions 1–47 are disordered; the sequence is MPKMKTHRASAKRFKKTANGGLKSASAYTSHRFHGKTKKQRRQLRGT.

Belongs to the bacterial ribosomal protein bL35 family.

The polypeptide is Large ribosomal subunit protein bL35 (Leuconostoc citreum (strain KM20)).